The primary structure comprises 505 residues: Lysine--tRNA ligase (505 aa).

Mg(2+)-binding residues include Glu403 and Glu410.

The protein belongs to the class-II aminoacyl-tRNA synthetase family. As to quaternary structure, homodimer. The cofactor is Mg(2+).

It is found in the cytoplasm. It catalyses the reaction tRNA(Lys) + L-lysine + ATP = L-lysyl-tRNA(Lys) + AMP + diphosphate. The chain is Lysine--tRNA ligase from Methanospirillum hungatei JF-1 (strain ATCC 27890 / DSM 864 / NBRC 100397 / JF-1).